Reading from the N-terminus, the 850-residue chain is Pentatricopeptide repeat-containing protein At3g49170, chloroplastic (850 aa).

A chloroplast-targeting transit peptide spans 1–50 (MAMISFSFPSPAKLPIKSQPSVSNRINVADRLILRHLNAGDLRGAVSALD). PPR repeat units lie at residues 61–95 (DSVT…DIEP), 96–130 (DSVL…GKRD), 131–164 (VVSW…GLVP), 165–199 (NDYC…GHFE), 201–232 (DVCV…MSEL), 233–267 (NVVT…GFES), 268–302 (DKFT…GLVD), 303–334 (DVEC…MEDH), 335–370 (SVMS…GHVE), 372–406 (NHFT…GLAS), 407–437 (NSSV…LSEK), 438–472 (NLVS…ELGV), 473–507 (SAFT…GLSC), 508–538 (NQPV…MENR), 539–573 (NVIS…GVKP), 574–609 (NEVT…KIKP), and 610–640 (KMEH…MPFQ). A type E motif region spans residues 645–720 (VWRTFLGACR…EGGCSWIEVG (76 aa)). The interval 721 to 751 (DKIHKFYVGDTAHPNAHQIYDELDRLITEIK) is type E(+) motif. The segment at 752–850 (RCGYVPDTDL…DGKCSCNDYW (99 aa)) is type DYW motif.

The protein belongs to the PPR family. PCMP-H subfamily.

It is found in the plastid. Its subcellular location is the chloroplast. Functionally, may play a role in embryogenesis. This chain is Pentatricopeptide repeat-containing protein At3g49170, chloroplastic (EMB2261), found in Arabidopsis thaliana (Mouse-ear cress).